The primary structure comprises 154 residues: Small heat shock protein IbpB (154 aa).

A sHSP domain is found at 26-137; sequence GQEPQGFPPY…QPQRIAIGSA (112 aa).

The protein belongs to the small heat shock protein (HSP20) family. Homodimer. Forms homomultimers of about 100-150 subunits at optimal growth temperatures. Conformation changes to oligomers at high temperatures or high ionic concentrations. The decrease in size of the multimers is accompanied by an increase in chaperone activity.

It is found in the cytoplasm. In terms of biological role, associates with aggregated proteins, together with IbpA, to stabilize and protect them from irreversible denaturation and extensive proteolysis during heat shock and oxidative stress. Aggregated proteins bound to the IbpAB complex are more efficiently refolded and reactivated by the ATP-dependent chaperone systems ClpB and DnaK/DnaJ/GrpE. Its activity is ATP-independent. The sequence is that of Small heat shock protein IbpB from Yersinia pseudotuberculosis serotype O:1b (strain IP 31758).